The following is a 254-amino-acid chain: 3-deoxy-manno-octulosonate cytidylyltransferase (254 aa).

It belongs to the KdsB family.

The protein resides in the cytoplasm. It catalyses the reaction 3-deoxy-alpha-D-manno-oct-2-ulosonate + CTP = CMP-3-deoxy-beta-D-manno-octulosonate + diphosphate. The protein operates within nucleotide-sugar biosynthesis; CMP-3-deoxy-D-manno-octulosonate biosynthesis; CMP-3-deoxy-D-manno-octulosonate from 3-deoxy-D-manno-octulosonate and CTP: step 1/1. It participates in bacterial outer membrane biogenesis; lipopolysaccharide biosynthesis. Its function is as follows. Activates KDO (a required 8-carbon sugar) for incorporation into bacterial lipopolysaccharide in Gram-negative bacteria. This Pseudomonas fluorescens (strain SBW25) protein is 3-deoxy-manno-octulosonate cytidylyltransferase.